A 715-amino-acid chain; its full sequence is SANT and BTB domain regulator of class switch recombination (715 aa).

The region spanning D21–K59 is the SANT domain. Residues M146–M254 enclose the BTB domain. Residues S552–E573 are compositionally biased toward acidic residues. 2 disordered regions span residues S552–Q623 and S689–T715. Over residues Q578 to E605 the composition is skewed to basic residues. 2 stretches are compositionally biased toward polar residues: residues D614–Q623 and A690–T699.

It belongs to the KIAA1841 family. As to quaternary structure, homodimer.

Functionally, negatively regulates class switch recombination or isotype switching in splenic B-cells. This chain is SANT and BTB domain regulator of class switch recombination, found in Xenopus laevis (African clawed frog).